The sequence spans 122 residues: Large ribosomal subunit protein uL14 (122 aa).

This sequence belongs to the universal ribosomal protein uL14 family. In terms of assembly, part of the 50S ribosomal subunit. Forms a cluster with proteins L3 and L19. In the 70S ribosome, L14 and L19 interact and together make contacts with the 16S rRNA in bridges B5 and B8.

In terms of biological role, binds to 23S rRNA. Forms part of two intersubunit bridges in the 70S ribosome. This is Large ribosomal subunit protein uL14 from Lysinibacillus sphaericus (strain C3-41).